A 74-amino-acid chain; its full sequence is Large ribosomal subunit protein uL14c (74 aa).

Belongs to the universal ribosomal protein uL14 family. Part of the 50S ribosomal subunit.

It is found in the plastid. It localises to the chloroplast. Its function is as follows. Binds to 23S rRNA. In Oenothera ammophila (Evening primerose), this protein is Large ribosomal subunit protein uL14c (rpl14).